The following is a 415-amino-acid chain: D-serine dehydratase (415 aa).

K68 is modified (N6-(pyridoxal phosphate)lysine). Pyridoxal 5'-phosphate is bound by residues Y204, Y211, T253, G279, and N280. The Zn(2+) site is built by H385 and C387.

It belongs to the DSD1 family. Homodimer. The cofactor is pyridoxal 5'-phosphate. Requires Zn(2+) as cofactor.

The protein resides in the cytoplasm. The protein localises to the nucleus. It carries out the reaction D-serine = pyruvate + NH4(+). Functionally, catalyzes the conversion of D-serine to pyruvate and ammonia. May play a role in D-serine detoxification. The chain is D-serine dehydratase from Schizosaccharomyces pombe (strain 972 / ATCC 24843) (Fission yeast).